A 353-amino-acid polypeptide reads, in one-letter code: Photosystem II D2 protein (353 aa).

Threonine 2 carries the post-translational modification N-acetylthreonine. The residue at position 2 (threonine 2) is a Phosphothreonine. A helical membrane pass occupies residues 41–61 (CAYFALGGWFTGTTFVTSWYT). Histidine 118 contributes to the chlorophyll a binding site. A helical membrane pass occupies residues 125–141 (GFMLRQFELARSVQLRP). Residues glutamine 130 and asparagine 143 each contribute to the pheophytin a site. Residues 153–166 (VFVSVFLIYPLGQS) traverse the membrane as a helical segment. Residue histidine 198 participates in chlorophyll a binding. A helical membrane pass occupies residues 208–228 (AALLCAIHGATVENTLFEDGD). The a plastoquinone site is built by histidine 215 and phenylalanine 262. Histidine 215 contacts Fe cation. Residue histidine 269 participates in Fe cation binding. The helical transmembrane segment at 279–295 (GLWMSALGVVGLALNLR) threads the bilayer.

Belongs to the reaction center PufL/M/PsbA/D family. PSII is composed of 1 copy each of membrane proteins PsbA, PsbB, PsbC, PsbD, PsbE, PsbF, PsbH, PsbI, PsbJ, PsbK, PsbL, PsbM, PsbT, PsbX, PsbY, PsbZ, Psb30/Ycf12, at least 3 peripheral proteins of the oxygen-evolving complex and a large number of cofactors. It forms dimeric complexes. It depends on The D1/D2 heterodimer binds P680, chlorophylls that are the primary electron donor of PSII, and subsequent electron acceptors. It shares a non-heme iron and each subunit binds pheophytin, quinone, additional chlorophylls, carotenoids and lipids. There is also a Cl(-1) ion associated with D1 and D2, which is required for oxygen evolution. The PSII complex binds additional chlorophylls, carotenoids and specific lipids. as a cofactor.

It is found in the plastid. The protein localises to the chloroplast thylakoid membrane. It catalyses the reaction 2 a plastoquinone + 4 hnu + 2 H2O = 2 a plastoquinol + O2. Photosystem II (PSII) is a light-driven water:plastoquinone oxidoreductase that uses light energy to abstract electrons from H(2)O, generating O(2) and a proton gradient subsequently used for ATP formation. It consists of a core antenna complex that captures photons, and an electron transfer chain that converts photonic excitation into a charge separation. The D1/D2 (PsbA/PsbD) reaction center heterodimer binds P680, the primary electron donor of PSII as well as several subsequent electron acceptors. D2 is needed for assembly of a stable PSII complex. This is Photosystem II D2 protein from Dioscorea elephantipes (Elephant's foot yam).